The chain runs to 67 residues: Toxin Bl-1 (67 aa).

An LCN-type CS-alpha/beta domain is found at 2-66 (RDGYISQPEN…GIIVDGIKCH (65 aa)). 4 disulfides stabilise this stretch: C12–C65, C16–C37, C23–C47, and C27–C49. The residue at position 67 (T67) is a Threonine amide.

The protein belongs to the long (4 C-C) scorpion toxin superfamily. Sodium channel inhibitor family. Alpha subfamily. In terms of tissue distribution, expressed by the venom gland.

The protein resides in the secreted. Functionally, alpha toxins bind voltage-independently at site-3 of sodium channels (Nav) and inhibit the inactivation of the activated channels, thereby blocking neuronal transmission. Is highly toxic to insects (tested on the crickets A.domesticus). This peptide may also be toxic to mammals, since it is similar to alpha-like toxins that are active on both insect and mammalian sodium channels. The protein is Toxin Bl-1 of Buthacus leptochelys (Egyptian fat-tailed scorpion).